The sequence spans 1402 residues: DNA-directed RNA polymerase subunit beta' (1402 aa).

Residues Cys-72, Cys-74, Cys-87, and Cys-90 each contribute to the Zn(2+) site. The Mg(2+) site is built by Asp-463, Asp-465, and Asp-467. Residues Cys-811, Cys-885, Cys-892, and Cys-895 each coordinate Zn(2+).

This sequence belongs to the RNA polymerase beta' chain family. The RNAP catalytic core consists of 2 alpha, 1 beta, 1 beta' and 1 omega subunit. When a sigma factor is associated with the core the holoenzyme is formed, which can initiate transcription. Requires Mg(2+) as cofactor. It depends on Zn(2+) as a cofactor.

The enzyme catalyses RNA(n) + a ribonucleoside 5'-triphosphate = RNA(n+1) + diphosphate. Functionally, DNA-dependent RNA polymerase catalyzes the transcription of DNA into RNA using the four ribonucleoside triphosphates as substrates. The polypeptide is DNA-directed RNA polymerase subunit beta' (Paracoccus denitrificans (strain Pd 1222)).